Consider the following 525-residue polypeptide: Allantoate deiminase (525 aa).

The first 53 residues, 1 to 53, serve as a signal peptide directing secretion; the sequence is MAVPHPSSSSSRSHPFLSHVYHTSFHHHHHHNHPSLVLFWCLVFSLLSPLALS. Residues 56–75 show a composition bias toward low complexity; that stretch reads SSSSSSSSDSSSSSSSHISL. The interval 56-78 is disordered; that stretch reads SSSSSSSSDSSSSSSSHISLGIG. N-linked (GlcNAc...) asparagine glycosylation occurs at Asn-156. Mn(2+) is bound by residues His-167, Asp-178, Glu-215, His-281, and His-499.

This sequence belongs to the peptidase M20A family. Homodimer. Mn(2+) serves as cofactor. As to expression, expressed in seedlings, roots, stems, leaves, flowers, siliques and seeds.

Its subcellular location is the endoplasmic reticulum. It catalyses the reaction allantoate + H2O + 2 H(+) = (S)-2-ureidoglycine + NH4(+) + CO2. With respect to regulation, inhibited by borate, fluoride, L-Asn and L-Asp, but not by phenylphosphorodiamidate. Functionally, involved in the catabolism of purine nucleotides. Can use allantoate as substrate, but not Nalpha-carbamoyl-L-Asp, Nalpha-carbamoyl-L-Ala or Nalpha-carbamoyl-Gly. The sequential activity of AAH, UGLYAH and UAH allows a complete purine breakdown without the intermediate generation of urea. Involved in the regulation of seed maturation and seed dormancy. This chain is Allantoate deiminase, found in Arabidopsis thaliana (Mouse-ear cress).